Reading from the N-terminus, the 294-residue chain is Aquaporin NIP1-2 (294 aa).

Residue M1 is modified to N-acetylmethionine. The next 2 helical transmembrane spans lie at L54–V74 and V82–L102. An NPA 1 motif is present at residues N111 to A113. The next 3 helical transmembrane spans lie at V133 to L153, S177 to T197, and A201 to A221. An NPA 2 motif is present at residues N230–G232. The helical transmembrane segment at W248 to V268 threads the bilayer. At S283 the chain carries Phosphoserine.

The protein belongs to the MIP/aquaporin (TC 1.A.8) family. NIP (TC 1.A.8.12) subfamily. As to expression, expressed in developing seeds.

Its subcellular location is the membrane. Its function is as follows. Water channel probably required to promote glycerol permeability and water transport across cell membranes. The polypeptide is Aquaporin NIP1-2 (NIP1-2) (Arabidopsis thaliana (Mouse-ear cress)).